Consider the following 421-residue polypeptide: MATALQKPGMVPPPPGEESQTVILPPGWHSYLSPQGRRYYVNTTTNETTWERPSSSPGISASPAPHRSSLPTTVNGYHASGTPAHPPETAHMSLRKSTGDSQNLGSSSPGRKQSKENTITINCVTFPHPDTMPEQQLLKPTEWSYCDYFWADKKDPQGNGTVAGFELLLQKQLKGKQMQKEMSEFIRERIKIEEEYAKNLAKLSQNSLAAQEEGSLGEAWAQVKKSLADEAEVHLKFSAKLHSEVEKPLMNFRENFKKDMKKCDHHIADLRKQLASRYASVEKARKALTERQKDLEMKTQQLEIKLSNKTEEDIKKARRKSTQAGDDLMRCVDLYNQAQSKWFEEMVTTTLELERLEVERVEMIRQHLCQYTQLRHETDMFNQSTVEPVDQLLRKVDPAKDRELWVREHKTGNIRPVDMEI.

The disordered stretch occupies residues 1–117 (MATALQKPGM…SPGRKQSKEN (117 aa)). The WW domain maps to 22–55 (VILPPGWHSYLSPQGRRYYVNTTTNETTWERPSS). Polar residues predominate over residues 41-52 (VNTTTNETTWER). Low complexity predominate over residues 53–65 (PSSSPGISASPAP). Phosphoserine is present on residues serine 62 and serine 108. Positions 95–117 (RKSTGDSQNLGSSSPGRKQSKEN) are enriched in polar residues. One can recognise an F-BAR domain in the interval 141 to 401 (TEWSYCDYFW…LLRKVDPAKD (261 aa)). Positions 254–328 (ENFKKDMKKC…RKSTQAGDDL (75 aa)) form a coiled coil.

In terms of tissue distribution, expressed abundantly in brain with lower levels in heart and testis. In the brain, expressed prominently in the Purkinje layer of the cerebellum, moderately in hippocampus, and less extensively in cerebral cortex and caudate putamen.

It is found in the cytoplasm. May play a role in promoting maturation and morphological differentiation of cerebellar neurons. The sequence is that of Growth arrest-specific protein 7 (Gas7) from Mus musculus (Mouse).